Consider the following 950-residue polypeptide: Translation initiation factor IF-2 (950 aa).

4 stretches are compositionally biased toward basic and acidic residues: residues 128–158, 165–186, 200–234, and 291–312; these read KPKV…EAKA, AEVK…EKKK, KRAE…DNRR, and NRRD…DGNR. Positions 128–354 are disordered; it reads KPKVAEPVKK…NNQSSSVPAT (227 aa). Composition is skewed to polar residues over residues 322 to 336 and 343 to 353; these read NRNQ…NWNQ and YQNNQSSSVPA. The tr-type G domain maps to 448 to 619; it reads ERPAVVTIMG…LLVAEVQELK (172 aa). Positions 457 to 464 are G1; sequence GHVDHGKT. A GTP-binding site is contributed by 457–464; sequence GHVDHGKT. Residues 482–486 form a G2 region; sequence GITQH. Residues 503–506 form a G3 region; sequence DTPG. GTP contacts are provided by residues 503-507 and 557-560; these read DTPGH and NKID. Positions 557–560 are G4; the sequence is NKID. Residues 595–597 form a G5 region; that stretch reads SAK.

Belongs to the TRAFAC class translation factor GTPase superfamily. Classic translation factor GTPase family. IF-2 subfamily.

It localises to the cytoplasm. One of the essential components for the initiation of protein synthesis. Protects formylmethionyl-tRNA from spontaneous hydrolysis and promotes its binding to the 30S ribosomal subunits. Also involved in the hydrolysis of GTP during the formation of the 70S ribosomal complex. The protein is Translation initiation factor IF-2 of Lactococcus lactis subsp. cremoris (strain MG1363).